Here is a 502-residue protein sequence, read N- to C-terminus: Probable malate:quinone oxidoreductase (502 aa).

Belongs to the MQO family. Requires FAD as cofactor.

The catalysed reaction is (S)-malate + a quinone = a quinol + oxaloacetate. Its pathway is carbohydrate metabolism; tricarboxylic acid cycle; oxaloacetate from (S)-malate (quinone route): step 1/1. The chain is Probable malate:quinone oxidoreductase from Parasynechococcus marenigrum (strain WH8102).